A 286-amino-acid polypeptide reads, in one-letter code: ATP synthase gamma chain (286 aa).

It belongs to the ATPase gamma chain family. F-type ATPases have 2 components, CF(1) - the catalytic core - and CF(0) - the membrane proton channel. CF(1) has five subunits: alpha(3), beta(3), gamma(1), delta(1), epsilon(1). CF(0) has three main subunits: a, b and c.

The protein resides in the cell inner membrane. Functionally, produces ATP from ADP in the presence of a proton gradient across the membrane. The gamma chain is believed to be important in regulating ATPase activity and the flow of protons through the CF(0) complex. The chain is ATP synthase gamma chain from Dechloromonas aromatica (strain RCB).